The primary structure comprises 192 residues: LOB domain-containing protein 32 (192 aa).

The LOB domain maps to 4–105; it reads NRCAVCKILN…QDIESAVNEL (102 aa).

Belongs to the LOB domain-containing protein family.

This chain is LOB domain-containing protein 32 (LBD32), found in Arabidopsis thaliana (Mouse-ear cress).